Consider the following 648-residue polypeptide: Threonine--tRNA ligase (648 aa).

One can recognise a TGS domain in the interval 1-63 (MAQISLTFPD…TQDAAIAIHT (63 aa)). The catalytic stretch occupies residues 247 to 544 (DHRKLGREMN…LIEEHAGKLP (298 aa)). Zn(2+)-binding residues include C344, H395, and H521.

This sequence belongs to the class-II aminoacyl-tRNA synthetase family. As to quaternary structure, homodimer. Requires Zn(2+) as cofactor.

It is found in the cytoplasm. The enzyme catalyses tRNA(Thr) + L-threonine + ATP = L-threonyl-tRNA(Thr) + AMP + diphosphate + H(+). Its function is as follows. Catalyzes the attachment of threonine to tRNA(Thr) in a two-step reaction: L-threonine is first activated by ATP to form Thr-AMP and then transferred to the acceptor end of tRNA(Thr). Also edits incorrectly charged L-seryl-tRNA(Thr). The protein is Threonine--tRNA ligase of Ruegeria sp. (strain TM1040) (Silicibacter sp.).